Reading from the N-terminus, the 153-residue chain is Superoxide dismutase [Cu-Zn] (153 aa).

Cu cation is bound by residues His-45, His-47, and His-62. An intrachain disulfide couples Cys-56 to Cys-145. Zn(2+) is bound by residues His-62, His-70, His-79, and Asp-82. His-119 provides a ligand contact to Cu cation.

The protein belongs to the Cu-Zn superoxide dismutase family. Homodimer. The cofactor is Cu cation. Zn(2+) serves as cofactor.

The protein localises to the cytoplasm. The catalysed reaction is 2 superoxide + 2 H(+) = H2O2 + O2. In terms of biological role, destroys radicals which are normally produced within the cells and which are toxic to biological systems. This is Superoxide dismutase [Cu-Zn] from Drosophila teissieri (Fruit fly).